A 243-amino-acid polypeptide reads, in one-letter code: Undecaprenyl-phosphate mannosyltransferase (243 aa).

This sequence belongs to the glycosyltransferase 2 family.

It catalyses the reaction di-trans,octa-cis-undecaprenyl phosphate + GDP-alpha-D-mannose = D-mannosyl di-trans,octa-cis-undecaprenyl phosphate + GDP. Catalyzes the transfer of mannose from GDP-mannose to D-mannosyl-1-phosphoundecaprenol. The chain is Undecaprenyl-phosphate mannosyltransferase from Micrococcus luteus (strain ATCC 4698 / DSM 20030 / JCM 1464 / CCM 169 / CCUG 5858 / IAM 1056 / NBRC 3333 / NCIMB 9278 / NCTC 2665 / VKM Ac-2230) (Micrococcus lysodeikticus).